A 704-amino-acid chain; its full sequence is Elongation factor G (704 aa).

A tr-type G domain is found at 10-286 (KKVRNIGIMA…AVIDFLPNPM (277 aa)). GTP contacts are provided by residues 19-26 (AHIDAGKT), 83-87 (DTPGH), and 137-140 (NKMD).

It belongs to the TRAFAC class translation factor GTPase superfamily. Classic translation factor GTPase family. EF-G/EF-2 subfamily.

It is found in the cytoplasm. Catalyzes the GTP-dependent ribosomal translocation step during translation elongation. During this step, the ribosome changes from the pre-translocational (PRE) to the post-translocational (POST) state as the newly formed A-site-bound peptidyl-tRNA and P-site-bound deacylated tRNA move to the P and E sites, respectively. Catalyzes the coordinated movement of the two tRNA molecules, the mRNA and conformational changes in the ribosome. In Corynebacterium jeikeium (strain K411), this protein is Elongation factor G.